Consider the following 310-residue polypeptide: Olfactory receptor 5AR1 (310 aa).

Topologically, residues 1-25 (MDKENHSVVTEFVFMGITQDPQLQI) are extracellular. Asn-5 carries N-linked (GlcNAc...) asparagine glycosylation. A helical membrane pass occupies residues 26-46 (IFFVVFLLVYLVNVIGNVGMI). Residues 47 to 54 (ILIITDSQ) are Cytoplasmic-facing. The helical transmembrane segment at 55–75 (LHTPMYFFLCNLSFVDLGYSS) threads the bilayer. The Extracellular portion of the chain corresponds to 76 to 99 (AIAPRMLADFLTKHKVISFSSCAT). An intrachain disulfide couples Cys-97 to Cys-189. The helical transmembrane segment at 100 to 120 (QFAFFVGFVDAECYVLAAMAY) threads the bilayer. Residues 121-133 (DRFVAICRPLHYS) are Cytoplasmic-facing. A helical transmembrane segment spans residues 134-154 (TLMSKKVCLVLMLGSYFAGLV). Residues 155 to 196 (SLVAHTSLTFSLSYCGSNIINHFFCEIPPLLALSCSDTYISE) lie on the Extracellular side of the membrane. Residues 197-217 (ILLFSLCGFIEFSTILIIFIS) form a helical membrane-spanning segment. Cu cation is bound at residue Cys-203. Residues 218–237 (YAFILIAIIRIRSAEGRLKA) are Cytoplasmic-facing. Residues 238 to 258 (FSTCGSHLTGVTLFYGTVMFM) traverse the membrane as a helical segment. Cu cation-binding residues include Met-256 and Arg-261. At 259–271 (YLRPTSSYSLDQD) the chain is on the extracellular side. Residues 272–292 (KWASVFYTIIIPMLNPLIYSL) traverse the membrane as a helical segment. Residues 293–310 (RNKDVKAAFKKLIGKKPQ) lie on the Cytoplasmic side of the membrane.

The protein belongs to the G-protein coupled receptor 1 family.

It is found in the cell membrane. With respect to regulation, copper binding enhances receptor activity in response to odorant binding. In terms of biological role, olfactory receptor that is activated by the binding of organosulfur odorants with thioether groups such as (methylthio)methanethiol (MTMT). The activity of this receptor is mediated by G proteins which activate adenylyl cyclase. This chain is Olfactory receptor 5AR1, found in Mus musculus (Mouse).